Consider the following 227-residue polypeptide: Thiamine-phosphate synthase (227 aa).

4-amino-2-methyl-5-(diphosphooxymethyl)pyrimidine contacts are provided by residues 50-54 and D82; that span reads QFRQK. Mg(2+) is bound by residues D83 and D102. Residue T121 coordinates 4-amino-2-methyl-5-(diphosphooxymethyl)pyrimidine. 2-[(2R,5Z)-2-carboxy-4-methylthiazol-5(2H)-ylidene]ethyl phosphate is bound at residue 147–149; it reads TTS. K150 is a 4-amino-2-methyl-5-(diphosphooxymethyl)pyrimidine binding site. 2-[(2R,5Z)-2-carboxy-4-methylthiazol-5(2H)-ylidene]ethyl phosphate contacts are provided by residues G178 and 198–199; that span reads LS.

It belongs to the thiamine-phosphate synthase family. Mg(2+) serves as cofactor.

It carries out the reaction 2-[(2R,5Z)-2-carboxy-4-methylthiazol-5(2H)-ylidene]ethyl phosphate + 4-amino-2-methyl-5-(diphosphooxymethyl)pyrimidine + 2 H(+) = thiamine phosphate + CO2 + diphosphate. The enzyme catalyses 2-(2-carboxy-4-methylthiazol-5-yl)ethyl phosphate + 4-amino-2-methyl-5-(diphosphooxymethyl)pyrimidine + 2 H(+) = thiamine phosphate + CO2 + diphosphate. It catalyses the reaction 4-methyl-5-(2-phosphooxyethyl)-thiazole + 4-amino-2-methyl-5-(diphosphooxymethyl)pyrimidine + H(+) = thiamine phosphate + diphosphate. The protein operates within cofactor biosynthesis; thiamine diphosphate biosynthesis; thiamine phosphate from 4-amino-2-methyl-5-diphosphomethylpyrimidine and 4-methyl-5-(2-phosphoethyl)-thiazole: step 1/1. Its function is as follows. Condenses 4-methyl-5-(beta-hydroxyethyl)thiazole monophosphate (THZ-P) and 2-methyl-4-amino-5-hydroxymethyl pyrimidine pyrophosphate (HMP-PP) to form thiamine monophosphate (TMP). This chain is Thiamine-phosphate synthase, found in Salinibacter ruber (strain DSM 13855 / M31).